Here is a 369-residue protein sequence, read N- to C-terminus: MKREKKDYYEILGVPRDATQEEIKRAYKRLVKEWHPDRHPENRKEAEQRFKEIQEAYEVLSDPQKRAMYDRFGYVGEQPTYQETESGGFFEDIFKEFENIFNRDIFDVFFGERPGQEEKREYARRGEDIRYEIEVTLSDLINGAEIPVEYERYETCPRCGGTGVEPNAGYINCPSCGGTGRIREERRSFFGYFVSERTCERCGGTGKIPREYCHECGGSGRVLRKVRRTVKIPPNVEDGTQLRITGGGNAGYYGGPYGDLIVIVRVKPDPRFKKSGSDLVYDVTIDYLQAILGTTVEVPLPEGGTTMLKIPPGTQPETVFRLKGKGLPNRYGRRGDLIVNVHVEIPKTLSREERKVLEDLAKKRGVTIG.

The J domain maps to 7–73 (DYYEILGVPR…QKRAMYDRFG (67 aa)). A CR-type zinc finger spans residues 143 to 225 (GAEIPVEYER…CGGSGRVLRK (83 aa)). Positions 156, 159, 173, 176, 199, 202, 213, and 216 each coordinate Zn(2+). CXXCXGXG motif repeat units follow at residues 156 to 163 (CPRCGGTG), 173 to 180 (CPSCGGTG), 199 to 206 (CERCGGTG), and 213 to 220 (CHECGGSG).

It belongs to the DnaJ family. As to quaternary structure, homodimer. Requires Zn(2+) as cofactor.

It localises to the cytoplasm. Its function is as follows. Participates actively in the response to hyperosmotic and heat shock by preventing the aggregation of stress-denatured proteins and by disaggregating proteins, also in an autonomous, DnaK-independent fashion. Unfolded proteins bind initially to DnaJ; upon interaction with the DnaJ-bound protein, DnaK hydrolyzes its bound ATP, resulting in the formation of a stable complex. GrpE releases ADP from DnaK; ATP binding to DnaK triggers the release of the substrate protein, thus completing the reaction cycle. Several rounds of ATP-dependent interactions between DnaJ, DnaK and GrpE are required for fully efficient folding. Also involved, together with DnaK and GrpE, in the DNA replication of plasmids through activation of initiation proteins. In Thermotoga petrophila (strain ATCC BAA-488 / DSM 13995 / JCM 10881 / RKU-1), this protein is Chaperone protein DnaJ.